Here is a 459-residue protein sequence, read N- to C-terminus: MGKLFGTDGVRGVANSELTPELAFKLGRAGAYVLSKEAPQPRIVIGKDTRISGDMLEAALIAGITSVGGEALPVGVLPTPGIAYLTRKLKATAGVVISASHNPVADNGIKFFSASGFKLPDAVEEEIERYVLGEKGQSLDNVGGDAEGRHDDGLPAPTGALVGRVRPVADAETLFVEYLKSTVPVDFSGLKVVVDGANGAAYQVAPRILRELGAEVVTICCTPDGTNINDGCGSTHPEKLCEAVVAHGAHVGLAHDGDADRLIAVDEKGRIVDGDRIMVTCALHMKAKGQLPKDTVAVTVMSNMGLHLALKRAGIRILETKVGDRYVLEALLREGASFGGEQSGHILFLQHNTTGDGVLTGLQLLTVLKETGKPLSELAAQMEQLPQLLVNVRVKDKGCMNAPEAQAAVEAGKAKLAGRGRILVRPSGTEPLIRVMGEGPDPEELKQVVEAIADVFRRF.

Ser-100 (phosphoserine intermediate) is an active-site residue. Residues Ser-100, Asp-256, Asp-258, and Asp-260 each coordinate Mg(2+). A Phosphoserine modification is found at Ser-100.

The protein belongs to the phosphohexose mutase family. Mg(2+) is required as a cofactor. Post-translationally, activated by phosphorylation.

The enzyme catalyses alpha-D-glucosamine 1-phosphate = D-glucosamine 6-phosphate. Functionally, catalyzes the conversion of glucosamine-6-phosphate to glucosamine-1-phosphate. This is Phosphoglucosamine mutase from Heliobacterium modesticaldum (strain ATCC 51547 / Ice1).